A 156-amino-acid polypeptide reads, in one-letter code: MPRRRVIGQRKILPDPKFGSELLAKFVNILMVDGKKSTAEAIVYTALETLAQRSGKDFLEAFEVALDNVRPTVEVKSRRVGGSTYQVPVEVRPVRRNALAMRWIVDAARKRGDKSMALRLANELSDAAENKGSAVKKREDVHRMAEANKAFAHYRW.

This sequence belongs to the universal ribosomal protein uS7 family. Part of the 30S ribosomal subunit. Contacts proteins S9 and S11.

One of the primary rRNA binding proteins, it binds directly to 16S rRNA where it nucleates assembly of the head domain of the 30S subunit. Is located at the subunit interface close to the decoding center, probably blocks exit of the E-site tRNA. The sequence is that of Small ribosomal subunit protein uS7 from Yersinia enterocolitica serotype O:8 / biotype 1B (strain NCTC 13174 / 8081).